A 277-amino-acid polypeptide reads, in one-letter code: MELLHSGKVRDVYADGGDLILVASDRISVYDVVLPTPIPDKGKLLTALSLWWFDQLAELVPNHVLSATDVPPEFAGRAIRCRRLDMVPVECVARGYLTGGGFAEYQRTGAVSGVELPRGLVEAAALPEPVFTPSTKAPVGEHDQPITFGGVVDRVGAETAERLRRITLDVYRRGAELAAGRGILIADTKIELGWAADGTLTVGDELLTSDSSRFWPVESYQPGRAQFSYDKQYVRDWATRSGWDKQSPAPELPGEVVDATRARYVDVYEKLTGKRWG.

Belongs to the SAICAR synthetase family.

It catalyses the reaction 5-amino-1-(5-phospho-D-ribosyl)imidazole-4-carboxylate + L-aspartate + ATP = (2S)-2-[5-amino-1-(5-phospho-beta-D-ribosyl)imidazole-4-carboxamido]succinate + ADP + phosphate + 2 H(+). Its pathway is purine metabolism; IMP biosynthesis via de novo pathway; 5-amino-1-(5-phospho-D-ribosyl)imidazole-4-carboxamide from 5-amino-1-(5-phospho-D-ribosyl)imidazole-4-carboxylate: step 1/2. The sequence is that of Phosphoribosylaminoimidazole-succinocarboxamide synthase from Salinispora arenicola (strain CNS-205).